A 316-amino-acid chain; its full sequence is Solute carrier family 25 member 32 (316 aa).

Solcar repeat units follow at residues 20 to 109, 118 to 209, and 222 to 306; these read HVRY…IKSY, LEPL…LKLK, and LSTA…VSHF. 6 helical membrane passes run 26–46, 89–106, 123–143, 185–203, 227–243, and 281–300; these read LVAGVSGGVLSNLALHPLDLV, VWGAGLSWGLYFFFYNAI, YLVSAAEAGAMTLCITNPLWV, GFVPGLFGTSHGALQFMAY, YISVAALSKIFAVAATY, and GIAPNLIRVTPACCITFVVY.

It belongs to the mitochondrial carrier (TC 2.A.29) family.

The protein resides in the mitochondrion inner membrane. The catalysed reaction is FAD(in) = FAD(out). In terms of biological role, facilitates flavin adenine dinucleotide (FAD) translocation across the mitochondrial inner membrane into the mitochondrial matrix where it acts as a redox cofactor to assist flavoenzyme activities in fundamental metabolic processes including fatty acid beta-oxidation, amino acid and choline metabolism as well as mitochondrial electron transportation. In particular, provides FAD to DLD dehydrogenase of the glycine cleavage system, part of mitochondrial one-carbon metabolic pathway involved in neural tube closure in early embryogenesis. In Mus musculus (Mouse), this protein is Solute carrier family 25 member 32.